The chain runs to 232 residues: LOB domain-containing protein 11 (232 aa).

Residues 1 to 50 are disordered; sequence MLKMEINGGVATPTASAVAKVTETTTPVNSPSPTSSPPPPPSPQQPPQPP. Residues 34-50 show a composition bias toward pro residues; it reads TSSPPPPPSPQQPPQPP. An LOB domain is found at 54-155; that stretch reads SPCAACKILR…AQLAKTQVEL (102 aa). A disordered region spans residues 181 to 218; that stretch reads EQGQQKMSFESSFESGDEFISSPDEESNDLGFLEDNNN. Residues 188 to 202 are compositionally biased toward low complexity; the sequence is SFESSFESGDEFISS.

It belongs to the LOB domain-containing protein family. As to expression, expressed in young shoots, stems, leaves and flowers.

The chain is LOB domain-containing protein 11 (LBD11) from Arabidopsis thaliana (Mouse-ear cress).